The following is a 318-amino-acid chain: Olfactory receptor 13C7 (318 aa).

Residues 1-27 (MVSANQTASVTEFILLGLSAHPKLEKT) lie on the Extracellular side of the membrane. A helical transmembrane segment spans residues 28–48 (FFVLILLMYLVILLGNGVLIL). Topologically, residues 49–61 (MTVSNSHLHMPMY) are cytoplasmic. The chain crosses the membrane as a helical span at residues 62–82 (FFLGNLSFLDICYTTSSVPLI). The Extracellular portion of the chain corresponds to 83 to 100 (LDSFLTPRKTISFSACAV). The helical transmembrane segment at 101–121 (QMFLSFAMGATECVLLSMMAF) threads the bilayer. The Cytoplasmic segment spans residues 122–181 (DRYVAICNPLRYPVVMSKAAYMPKAAGSWVAGSTASMVQTSLAMRLPFCGDNIINHFTCE). The chain crosses the membrane as a helical span at residues 182-202 (ILAVLKLACADISVNVISMGV). Residues 203–205 (TNV) are Extracellular-facing. The chain crosses the membrane as a helical span at residues 206 to 226 (IFLGVPVLFISFSYVFIIATI). At 227–238 (LRIPSAEGRKKA) the chain is on the cytoplasmic side. The helical transmembrane segment at 239–259 (FSTCSAHLTVVVIFYGTILFM) threads the bilayer. Residues 260-278 (YGKPKSKDPLGADKQDLAD) are Extracellular-facing. Residues 279–289 (KLISLFYGVVT) traverse the membrane as a helical segment. Topologically, residues 290-318 (PMLNPIIYSLRNKDVKAAVRDLIFQKCFA) are cytoplasmic.

It belongs to the G-protein coupled receptor 1 family.

The protein localises to the cell membrane. In terms of biological role, odorant receptor. The protein is Olfactory receptor 13C7 of Homo sapiens (Human).